We begin with the raw amino-acid sequence, 101 residues long: Small ribosomal subunit protein uS14 (101 aa).

Residues 1-10 (MAKKSAIEKN) are compositionally biased toward basic and acidic residues. Positions 1-23 (MAKKSAIEKNNRRKKMTKNAAPK) are disordered. Over residues 11-23 (NRRKKMTKNAAPK) the composition is skewed to basic residues.

Belongs to the universal ribosomal protein uS14 family. As to quaternary structure, part of the 30S ribosomal subunit. Contacts proteins S3 and S10.

In terms of biological role, binds 16S rRNA, required for the assembly of 30S particles and may also be responsible for determining the conformation of the 16S rRNA at the A site. The protein is Small ribosomal subunit protein uS14 of Rhodopseudomonas palustris (strain TIE-1).